A 293-amino-acid polypeptide reads, in one-letter code: Ribosomal RNA small subunit methyltransferase A (293 aa).

Asn-38, Val-40, Gly-65, Glu-86, Asp-116, and Asn-135 together coordinate S-adenosyl-L-methionine.

It belongs to the class I-like SAM-binding methyltransferase superfamily. rRNA adenine N(6)-methyltransferase family. RsmA subfamily.

It localises to the cytoplasm. It catalyses the reaction adenosine(1518)/adenosine(1519) in 16S rRNA + 4 S-adenosyl-L-methionine = N(6)-dimethyladenosine(1518)/N(6)-dimethyladenosine(1519) in 16S rRNA + 4 S-adenosyl-L-homocysteine + 4 H(+). Specifically dimethylates two adjacent adenosines (A1518 and A1519) in the loop of a conserved hairpin near the 3'-end of 16S rRNA in the 30S particle. May play a critical role in biogenesis of 30S subunits. The sequence is that of Ribosomal RNA small subunit methyltransferase A from Nocardia farcinica (strain IFM 10152).